The primary structure comprises 432 residues: MASPVAAQAGKLLRALALRPRFLAAGSQAVQLTSRRWLNLQEYQSKKLMSDNGVRVQRFFVADTANEALEAAKRLNAKEIVLKAQILAGGRGKGVFNSGLKGGVHLTKDPNVVGQLAKQMIGYNLATKQTPKEGVKVNKVMVAEALDISRETYLAILMDRSCNGPVLVGSPQGGVDIEEVAASNPELIFKEQIDIFEGIKDSQAQRMAENLGFVGPLKSQAADQITKLYNLFLKIDATQVEVNPFGETPEGQVVCFDAKINFDDNAEFRQKDIFAMDDKSENEPIENEAAKYDLKYIGLDGNIACFVNGAGLAMATCDIIFLNGGKPANFLDLGGGVKEAQVYQAFKLLTADPKVEAILVNIFGGIVNCAIIANGITKACRELELKVPLVVRLEGTNVQEAQKILNNSGLPITSAIDLEDAAKKAVASVAKK.

Residues 1–37 (MASPVAAQAGKLLRALALRPRFLAAGSQAVQLTSRRW) constitute a mitochondrion transit peptide. One can recognise an ATP-grasp domain in the interval 46 to 274 (KKLMSDNGVR…NAEFRQKDIF (229 aa)). Residue Q57 participates in GTP binding. K73 carries the post-translational modification N6-acetyllysine. K78 bears the N6-succinyllysine mark. GTP is bound at residue 90 to 92 (GRG). K132 and K139 each carry N6-acetyllysine. L146 lines the GTP pocket. At S161 the chain carries Phosphoserine. N6-acetyllysine occurs at positions 200, 218, and 227. Mg(2+)-binding residues include N243 and D257. An N6-acetyllysine mark is found at K271 and K291. N308 provides a ligand contact to substrate. K338 is subject to N6-succinyllysine. K347 bears the N6-acetyllysine mark. 365-367 (GIV) contacts substrate. K386 and K423 each carry N6-acetyllysine.

This sequence belongs to the succinate/malate CoA ligase beta subunit family. GTP-specific subunit beta subfamily. As to quaternary structure, heterodimer of an alpha and a beta subunit. The beta subunit determines specificity for GTP. It depends on Mg(2+) as a cofactor. As to expression, mainly expressed in liver, kidney, heart, spleen and skeletal muscle. Also found in intestine and colon, and in low amounts in lung, brain, prostate, testis and ovary.

The protein localises to the mitochondrion. The catalysed reaction is GTP + succinate + CoA = succinyl-CoA + GDP + phosphate. Its pathway is carbohydrate metabolism; tricarboxylic acid cycle; succinate from succinyl-CoA (ligase route): step 1/1. Functionally, GTP-specific succinyl-CoA synthetase functions in the citric acid cycle (TCA), coupling the hydrolysis of succinyl-CoA to the synthesis of GTP and thus represents the only step of substrate-level phosphorylation in the TCA. The beta subunit provides nucleotide specificity of the enzyme and binds the substrate succinate, while the binding sites for coenzyme A and phosphate are found in the alpha subunit. The sequence is that of Succinate--CoA ligase [GDP-forming] subunit beta, mitochondrial from Homo sapiens (Human).